A 756-amino-acid polypeptide reads, in one-letter code: Membrane-anchored protein 1 (756 aa).

The first 24 residues, 1-24 (MIRNTLAFLAILFLLIPTALLIIG), serve as a signal peptide directing secretion. N-linked (GlcNAc...) asparagine glycosylation is found at Asn52 and Asn64. The next 3 helical transmembrane spans lie at 91-111 (IISA…IFLV), 120-140 (IIVV…ELVL), and 148-168 (QSYV…ALCL). The N-linked (GlcNAc...) asparagine glycan is linked to Asn190. The interval 281–328 (YDEFRKSESSPSRSSVLSTSKPEVHETEGYCPHKTGNRPGFPSLNIPR) is disordered. A compositionally biased stretch (low complexity) spans 289–300 (SSPSRSSVLSTS). N-linked (GlcNAc...) asparagine glycans are attached at residues Asn396 and Asn407. A disordered region spans residues 427-453 (EPPATRMPQTRSPVNDHSSFPSDLPIK). The span at 433–447 (MPQTRSPVNDHSSFP) shows a compositional bias: polar residues. Ser438 carries the phosphoserine modification. N-linked (GlcNAc...) asparagine glycosylation is found at Asn459, Asn470, Asn471, Asn496, Asn497, Asn521, Asn522, Asn547, Asn548, Asn573, Asn574, Asn594, Asn598, Asn599, Asn618, Asn623, Asn649, Asn664, Asn676, and Asn685. The segment at 482–650 (MLKNVGNGPR…MPTSPNSRNN (169 aa)) is disordered. A compositionally biased stretch (low complexity) spans 485–520 (NVGNGPRNAPRNNSSNNLHAQGGMPMNMRGPRGAPR). Composition is skewed to polar residues over residues 593–605 (RNTS…SEFN), 617–629 (RNAS…TDLF), and 640–650 (GMPTSPNSRNN). Residues 686 to 697 (GSRNPSHGSLNT) show a composition bias toward polar residues. The tract at residues 686–713 (GSRNPSHGSLNTAHAGMGYGPRSMMRDP) is disordered. The N-linked (GlcNAc...) asparagine glycan is linked to Asn715. Positions 735 to 756 (FELPVRGNRNNRRGPGGNRMIR) are disordered.

It to yeast YOL019W and YMR063W.

Its subcellular location is the cell membrane. It is found in the cell tip. Functionally, required for correct cell separation at high temperatures. In Schizosaccharomyces pombe (strain 972 / ATCC 24843) (Fission yeast), this protein is Membrane-anchored protein 1 (mac1).